Consider the following 484-residue polypeptide: Glutamate--tRNA ligase (484 aa).

Residues 11 to 21 carry the 'HIGH' region motif; it reads PSPTGLLHIGN. Positions 255-259 match the 'KMSKS' region motif; that stretch reads KLSKR. Lysine 258 contacts ATP.

The protein belongs to the class-I aminoacyl-tRNA synthetase family. Glutamate--tRNA ligase type 1 subfamily. In terms of assembly, monomer.

Its subcellular location is the cytoplasm. The enzyme catalyses tRNA(Glu) + L-glutamate + ATP = L-glutamyl-tRNA(Glu) + AMP + diphosphate. In terms of biological role, catalyzes the attachment of glutamate to tRNA(Glu) in a two-step reaction: glutamate is first activated by ATP to form Glu-AMP and then transferred to the acceptor end of tRNA(Glu). The chain is Glutamate--tRNA ligase from Streptococcus agalactiae serotype V (strain ATCC BAA-611 / 2603 V/R).